A 371-amino-acid polypeptide reads, in one-letter code: tRNA-specific 2-thiouridylase MnmA (371 aa).

ATP is bound by residues glycine 13–serine 20 and methionine 39. The interval asparagine 99 to aspartate 101 is interaction with target base in tRNA. The Nucleophile role is filled by cysteine 104. The cysteines at positions 104 and 200 are disulfide-linked. An ATP-binding site is contributed by glycine 128. Positions lysine 150–glutamine 152 are interaction with tRNA. The Cysteine persulfide intermediate role is filled by cysteine 200. The segment at arginine 308 to tyrosine 309 is interaction with tRNA.

Belongs to the MnmA/TRMU family.

The protein localises to the cytoplasm. It carries out the reaction S-sulfanyl-L-cysteinyl-[protein] + uridine(34) in tRNA + AH2 + ATP = 2-thiouridine(34) in tRNA + L-cysteinyl-[protein] + A + AMP + diphosphate + H(+). In terms of biological role, catalyzes the 2-thiolation of uridine at the wobble position (U34) of tRNA, leading to the formation of s(2)U34. In Bacillus cereus (strain ATCC 10987 / NRS 248), this protein is tRNA-specific 2-thiouridylase MnmA.